The sequence spans 922 residues: Lysine-specific demethylase 4 (922 aa).

Polar residues predominate over residues 1–15; sequence MASAATTTHFPSSRI. Disordered stretches follow at residues 1–21 and 42–61; these read MASAATTTHFPSSRIPSEPCA and SSSCHVENDSRPLSPTMFTD. The 44-residue stretch at 87–130 folds into the JmjN domain; sequence VLTFYPTMREFKNFSQYIKKIEQNGGHLKAGIAKIVAPEGWTPR. Tyrosine 213 lines the 2-oxoglutarate pocket. Positions 223-388 constitute a JmjC domain; it reads DAQVEEWNMN…YGKDAVLCDC (166 aa). Fe cation is bound by residues histidine 265 and glutamate 267. Positions 275 and 283 each coordinate 2-oxoglutarate. Cysteine 314 and histidine 320 together coordinate Zn(2+). Lysine 321 contributes to the 2-oxoglutarate binding site. Histidine 356 serves as a coordination point for Fe cation. The Zn(2+) site is built by cysteine 386 and cysteine 388. A disordered region spans residues 435–475; that stretch reads KRRQSLADASKIAKRARLGASSTATDSDGSSGSSGSEEATE. Over residues 453–475 the composition is skewed to low complexity; it reads GASSTATDSDGSSGSSGSEEATE. The C2HC pre-PHD-type zinc finger occupies 639–675; sequence TTSCQLCELRGGALIPCQIGTDSTWAHVACALFNRRA. The PHD-type; degenerate zinc-finger motif lies at 723–783; it reads WECVVCHRTD…GVVMICHKHE (61 aa).

It belongs to the JHDM3 histone demethylase family. Fe(2+) serves as cofactor.

The protein resides in the nucleus. It carries out the reaction N(6),N(6),N(6)-trimethyl-L-lysyl(9)-[histone H3] + 2 2-oxoglutarate + 2 O2 = N(6)-methyl-L-lysyl(9)-[histone H3] + 2 formaldehyde + 2 succinate + 2 CO2. It catalyses the reaction N(6),N(6),N(6)-trimethyl-L-lysyl(36)-[histone H3] + 2 2-oxoglutarate + 2 O2 = N(6)-methyl-L-lysyl(36)-[histone H3] + 2 formaldehyde + 2 succinate + 2 CO2. Histone demethylase that specifically demethylates 'Lys-9' and 'Lys-36' residues of histone H3, thereby playing a central role in histone code. Demethylation of Lys residue generates formaldehyde and succinate. Involved in the negative regulation of lifespan in a germline-dependent fashion. The sequence is that of Lysine-specific demethylase 4 (jmjd-2) from Caenorhabditis elegans.